A 632-amino-acid chain; its full sequence is MNSQKASKMTGSLKKNDLYIFDLSEQLLNSLKLMSFDSTLREVEVEKTSDNDRNKESGDLQIARKKVTSNVMRCSVCQMSFDSRNEQKAHYQTDYHLMNVKRNLRGLDILSVEEFDALISKEHGIKSEDENSGGEQTSSDHEESEEASDRDPDLQTNNYMETIIENDLQKLGFQKDESDAISHINTQSPYIYFKSKYLQKNEVLAIYKSLFNKRSLSNPNEALTFWNSQENPMAISALFMVGGGHFAGAIVSHQRLNVKGNAHKKDETLIEQAVNFLEHKTFHRYTTRRKQGGSQSAMDNAKGKANSAGSALRRYNESALKTDIQGVLKDWEPYLSKCDNIFIRARNVSDKKIFTDNTVLNKGDERIKSFPFTTNRPTVLELKKAWCELSYLKILPKPEPLAVKETVQKLEVSNKKDEFKEKQEPLLEEIQTEEIISLLKKGRAPLLISFLKKNKLDGNFRLKPESKYSLTPTMLHYASQQGMKQMALILLSNIKCDPTIKNRLGRTAWDLNRNDDVRHAFQIARYNLGESFTNWDETHIGQPLSREQVDEINEKKKAIENEKAEKLIKLELEAAKEKQRFAKDAERGPGKKLTNIPSIQQQNLNSLTDEQRRRLMREQRARAAEERMKKKY.

The C2H2-type zinc-finger motif lies at 72 to 96; that stretch reads MRCSVCQMSFDSRNEQKAHYQTDYH. The segment at 123–155 is disordered; sequence HGIKSEDENSGGEQTSSDHEESEEASDRDPDLQ. Residues 232–392 enclose the VLRF1 domain; it reads PMAISALFMV…KKAWCELSYL (161 aa). Residue glutamine 295 is part of the active site. ANK repeat units lie at residues 470 to 500 and 504 to 530; these read LTPT…DPTI and LGRT…NLGE. 2 coiled-coil regions span residues 544–582 and 608–632; these read LSRE…QRFA and TDEQ…KKKY. Over residues 578 to 589 the composition is skewed to basic and acidic residues; the sequence is KQRFAKDAERGP. The interval 578–632 is disordered; the sequence is KQRFAKDAERGPGKKLTNIPSIQQQNLNSLTDEQRRRLMREQRARAAEERMKKKY. Polar residues predominate over residues 595–608; it reads NIPSIQQQNLNSLT. The segment covering 609-632 has biased composition (basic and acidic residues); it reads DEQRRRLMREQRARAAEERMKKKY.

Belongs to the ANKZF1/VMS1 family. As to quaternary structure, associates with 60S ribosomal subunit. Interacts with CDC48. Interacts with NPL4.

It is found in the cytoplasm. The protein localises to the mitochondrion. Its subcellular location is the endoplasmic reticulum membrane. Endonuclease that cleaves polypeptidyl-tRNAs downstream of the ribosome-associated quality control (RQC) pathway to release incompletely synthesized polypeptides for degradation. The RQC pathway disassembles aberrantly stalled translation complexes to recycle or degrade the constituent parts. VMS1 acts downstream disassembly of stalled ribosomes and specifically cleaves off the terminal 3'-CCA nucleotides universal to all tRNAs from polypeptidyl-tRNAs, releasing (1) ubiquitinated polypeptides from 60S ribosomal subunit for degradation by the ERAD pathway and (2) cleaved tRNAs for recycling. Component of an evolutionarily conserved system for ubiquitin-mediated mitochondria-associated protein degradation (MAD), which is necessary to maintain mitochondrial, cellular, and organismal viability. The chain is tRNA endonuclease VMS1 from Saccharomyces cerevisiae (strain ATCC 204508 / S288c) (Baker's yeast).